The sequence spans 1703 residues: Arf-GAP with Rho-GAP domain, ANK repeat and PH domain-containing protein 2 (1703 aa).

The SAM domain occupies 6-70 (EVNADIRDFL…LKQLQMIFSK (65 aa)). At tyrosine 77 the chain carries Phosphotyrosine. Disordered regions lie at residues 84–132 (KNGS…LSEG), 191–232 (EEHT…NGTN), and 286–319 (PVPE…LTLK). Polar residues-rich tracts occupy residues 85-103 (NGST…STHT), 123-132 (MVTTSTLSEG), and 197-214 (GNLT…NTEC). The segment covering 222–232 (TSGTHSGNGTN) has biased composition (low complexity). Polar residues predominate over residues 308 to 319 (NTTSAGKSLTLK). 2 consecutive PH domains span residues 480 to 572 (AKEK…SALK) and 585 to 677 (APEK…QSIA). The Arf-GAP domain maps to 674 to 809 (QSIAETLSDY…TLLASLTKEE (136 aa)). The C4-type zinc finger occupies 698-721 (CADCKAPDPDWASINLCVVICKKC). 2 consecutive PH domains span residues 899–1001 (QTAA…KRFV) and 1012–1110 (DYDL…KAAG). A Rho-GAP domain is found at 1114–1295 (NALQDQQLCK…DLINNYVEIF (182 aa)). The Ras-associating domain occupies 1324–1418 (GDLLIEVFVE…AYLVVKRFLT (95 aa)). In terms of domain architecture, PH 5 spans 1428–1531 (KSIKEGILKL…WMASIFIAQH (104 aa)). Serine 1627 is modified (phosphoserine). Disordered stretches follow at residues 1633 to 1670 (DTEA…DPKL) and 1684 to 1703 (RSRP…KEVK). Composition is skewed to basic and acidic residues over residues 1653–1670 (KKTE…DPKL) and 1688–1703 (LHKE…KEVK).

It is found in the cytoplasm. Its function is as follows. Phosphatidylinositol 3,4,5-trisphosphate-dependent GTPase-activating protein that modulates actin cytoskeleton remodeling by regulating ARF and RHO family members. Is activated by phosphatidylinositol 3,4,5-trisphosphate (PtdIns(3,4,5)P3) binding. Can be activated by phosphatidylinositol 3,4-bisphosphate (PtdIns(3,4,5)P2) binding, albeit with lower efficiency. The chain is Arf-GAP with Rho-GAP domain, ANK repeat and PH domain-containing protein 2 (Arap2) from Mus musculus (Mouse).